We begin with the raw amino-acid sequence, 358 residues long: Chorismate synthase (358 aa).

Arginine 47 contacts NADP(+). FMN is bound by residues 124-126 (RSS), 240-241 (NA), glycine 284, 299-303 (KPVAT), and arginine 325.

This sequence belongs to the chorismate synthase family. Homotetramer. The cofactor is FMNH2.

It carries out the reaction 5-O-(1-carboxyvinyl)-3-phosphoshikimate = chorismate + phosphate. The protein operates within metabolic intermediate biosynthesis; chorismate biosynthesis; chorismate from D-erythrose 4-phosphate and phosphoenolpyruvate: step 7/7. In terms of biological role, catalyzes the anti-1,4-elimination of the C-3 phosphate and the C-6 proR hydrogen from 5-enolpyruvylshikimate-3-phosphate (EPSP) to yield chorismate, which is the branch point compound that serves as the starting substrate for the three terminal pathways of aromatic amino acid biosynthesis. This reaction introduces a second double bond into the aromatic ring system. The sequence is that of Chorismate synthase from Bacteroides fragilis (strain YCH46).